The chain runs to 475 residues: Ribulose bisphosphate carboxylase large chain (475 aa).

A propeptide spanning residues 1–2 (MS) is cleaved from the precursor. Pro-3 carries the post-translational modification N-acetylproline. Lys-14 bears the N6,N6,N6-trimethyllysine mark. Substrate is bound by residues Asn-123 and Thr-173. The Proton acceptor role is filled by Lys-175. Substrate is bound at residue Lys-177. Lys-201, Asp-203, and Glu-204 together coordinate Mg(2+). The residue at position 201 (Lys-201) is an N6-carboxylysine. His-294 (proton acceptor) is an active-site residue. Residues Arg-295, His-327, and Ser-379 each coordinate substrate.

It belongs to the RuBisCO large chain family. Type I subfamily. As to quaternary structure, heterohexadecamer of 8 large chains and 8 small chains; disulfide-linked. The disulfide link is formed within the large subunit homodimers. Mg(2+) is required as a cofactor. The disulfide bond which can form in the large chain dimeric partners within the hexadecamer appears to be associated with oxidative stress and protein turnover.

It localises to the plastid. It is found in the chloroplast. It catalyses the reaction 2 (2R)-3-phosphoglycerate + 2 H(+) = D-ribulose 1,5-bisphosphate + CO2 + H2O. The catalysed reaction is D-ribulose 1,5-bisphosphate + O2 = 2-phosphoglycolate + (2R)-3-phosphoglycerate + 2 H(+). In terms of biological role, ruBisCO catalyzes two reactions: the carboxylation of D-ribulose 1,5-bisphosphate, the primary event in carbon dioxide fixation, as well as the oxidative fragmentation of the pentose substrate in the photorespiration process. Both reactions occur simultaneously and in competition at the same active site. The polypeptide is Ribulose bisphosphate carboxylase large chain (Larix occidentalis (Western larch)).